Reading from the N-terminus, the 565-residue chain is Adenine deaminase (565 aa).

The protein belongs to the metallo-dependent hydrolases superfamily. Adenine deaminase family. Requires Mn(2+) as cofactor.

The catalysed reaction is adenine + H2O + H(+) = hypoxanthine + NH4(+). In Lactobacillus delbrueckii subsp. bulgaricus (strain ATCC 11842 / DSM 20081 / BCRC 10696 / JCM 1002 / NBRC 13953 / NCIMB 11778 / NCTC 12712 / WDCM 00102 / Lb 14), this protein is Adenine deaminase.